Reading from the N-terminus, the 369-residue chain is Peptide chain release factor 2 (369 aa).

Position 251 is an N5-methylglutamine (Gln-251).

This sequence belongs to the prokaryotic/mitochondrial release factor family. Post-translationally, methylated by PrmC. Methylation increases the termination efficiency of RF2.

The protein resides in the cytoplasm. In terms of biological role, peptide chain release factor 2 directs the termination of translation in response to the peptide chain termination codons UGA and UAA. The polypeptide is Peptide chain release factor 2 (prfB) (Thermotoga maritima (strain ATCC 43589 / DSM 3109 / JCM 10099 / NBRC 100826 / MSB8)).